The sequence spans 293 residues: Formamidopyrimidine-DNA glycosylase (293 aa).

The active-site Schiff-base intermediate with DNA is the Pro-2. Glu-3 serves as the catalytic Proton donor. Lys-61 (proton donor; for beta-elimination activity) is an active-site residue. Positions 104, 123, and 169 each coordinate DNA. An FPG-type zinc finger spans residues Asp-255–Pro-289. The active-site Proton donor; for delta-elimination activity is the Arg-279.

It belongs to the FPG family. In terms of assembly, monomer. Zn(2+) is required as a cofactor.

It carries out the reaction Hydrolysis of DNA containing ring-opened 7-methylguanine residues, releasing 2,6-diamino-4-hydroxy-5-(N-methyl)formamidopyrimidine.. It catalyses the reaction 2'-deoxyribonucleotide-(2'-deoxyribose 5'-phosphate)-2'-deoxyribonucleotide-DNA = a 3'-end 2'-deoxyribonucleotide-(2,3-dehydro-2,3-deoxyribose 5'-phosphate)-DNA + a 5'-end 5'-phospho-2'-deoxyribonucleoside-DNA + H(+). Functionally, involved in base excision repair of DNA damaged by oxidation or by mutagenic agents. Acts as a DNA glycosylase that recognizes and removes damaged bases. Has a preference for oxidized purines, such as 7,8-dihydro-8-oxoguanine (8-oxoG). Has AP (apurinic/apyrimidinic) lyase activity and introduces nicks in the DNA strand. Cleaves the DNA backbone by beta-delta elimination to generate a single-strand break at the site of the removed base with both 3'- and 5'-phosphates. The protein is Formamidopyrimidine-DNA glycosylase of Mycolicibacterium vanbaalenii (strain DSM 7251 / JCM 13017 / BCRC 16820 / KCTC 9966 / NRRL B-24157 / PYR-1) (Mycobacterium vanbaalenii).